The primary structure comprises 63 residues: SSKWEACCDRCACTKSIPPQCHCADIRLNSCHSACESCACTHSIPAQCRCFDITDFCYKPCSG.

Cystine bridges form between Cys-7-Cys-61, Cys-8-Cys-23, Cys-11-Cys-57, Cys-13-Cys-21, Cys-31-Cys-38, Cys-35-Cys-50, and Cys-40-Cys-48.

The protein belongs to the Bowman-Birk serine protease inhibitor family. In terms of assembly, exists as a dimer in its native form.

In terms of biological role, inhibits trypsin, chymotrypsin, plasmin and factor XIIa. Does not inhibit factor Xa, thrombin, human plasma kallikrein, porcine pancreatic kallikrein and human urinary kallikrein. The sequence is that of Bowman-birk type proteinase inhibitor 2 from Amburana cearensis (Cerejeira).